The primary structure comprises 34 residues: Mu-theraphotoxin-Pspp1 (34 aa).

Cystine bridges form between Cys2-Cys17, Cys9-Cys22, and Cys16-Cys29. Phe34 is modified (phenylalanine amide).

The protein belongs to the neurotoxin 10 (Hwtx-1) family. Expressed by the venom gland.

The protein localises to the secreted. Functionally, voltage-gated sodium channel inhibitor. It is unclear if it selectively inhibits Nav1.7/SCN9A or shows similar potency on all sodium channels tested. According to Escoubas et al., 2006 and Nicolas et al., 2019, it is selective over Nav1.7/SCN9A (90% inhibition at 1 uM), versus Nav1.4 and Nav1.6 (35% inhibition), and shows a small inhibition on all other sodium channels (except Nav1.8/SCN10A). According to Goncalves et al., 2019, it shows a similar inhibition on almost all sodium channels tested (Nav1.1/SCN1A (IC(50)=280.3 nM), Nav1.2/SCN2A (IC(50)=73.7 nM), Nav1.3/SCN3A (IC(50)=201.5 nM), Nav1.4/SCN4A (IC(50)&gt;2100 nM), Nav1.5/SCN5A (IC(50)=710.6 nM), Nav1.6/SCN8A (IC(50)=491.2 nM), and Nav1.7/SCN9A (IC(50)=254.3-260 nM)), except Nav1.8/SCN10A. The voltage-dependence of steady-state Nav1.7/SCN9A channel activation and inactivation are not affected, suggesting that is does not act as a gating-modifier toxin but rather blocks or impedes ion flux through the channel pore. The toxin effect is partial and poorly reversible. In addition to its inhibition to sodium channels, it also shows a small inhibition on rat Kv3.4/KCNC4 potassium channels (20% inhibition at 1 uM). In vivo, when tested on pain models, it shows analgesic activity. In Phlogiellus sp. (Tarantula), this protein is Mu-theraphotoxin-Pspp1.